Here is a 174-residue protein sequence, read N- to C-terminus: Crossover junction endodeoxyribonuclease RuvC (174 aa).

Active-site residues include aspartate 8, glutamate 67, and aspartate 139. Residues aspartate 8, glutamate 67, and aspartate 139 each coordinate Mg(2+).

It belongs to the RuvC family. Homodimer which binds Holliday junction (HJ) DNA. The HJ becomes 2-fold symmetrical on binding to RuvC with unstacked arms; it has a different conformation from HJ DNA in complex with RuvA. In the full resolvosome a probable DNA-RuvA(4)-RuvB(12)-RuvC(2) complex forms which resolves the HJ. The cofactor is Mg(2+).

The protein localises to the cytoplasm. It catalyses the reaction Endonucleolytic cleavage at a junction such as a reciprocal single-stranded crossover between two homologous DNA duplexes (Holliday junction).. In terms of biological role, the RuvA-RuvB-RuvC complex processes Holliday junction (HJ) DNA during genetic recombination and DNA repair. Endonuclease that resolves HJ intermediates. Cleaves cruciform DNA by making single-stranded nicks across the HJ at symmetrical positions within the homologous arms, yielding a 5'-phosphate and a 3'-hydroxyl group; requires a central core of homology in the junction. The consensus cleavage sequence is 5'-(A/T)TT(C/G)-3'. Cleavage occurs on the 3'-side of the TT dinucleotide at the point of strand exchange. HJ branch migration catalyzed by RuvA-RuvB allows RuvC to scan DNA until it finds its consensus sequence, where it cleaves and resolves the cruciform DNA. This Pseudomonas putida (strain W619) protein is Crossover junction endodeoxyribonuclease RuvC.